Here is a 455-residue protein sequence, read N- to C-terminus: L-serine dehydratase (455 aa).

The protein belongs to the iron-sulfur dependent L-serine dehydratase family. It depends on [4Fe-4S] cluster as a cofactor.

The catalysed reaction is L-serine = pyruvate + NH4(+). It participates in carbohydrate biosynthesis; gluconeogenesis. This is L-serine dehydratase (sdaA) from Streptomyces coelicolor (strain ATCC BAA-471 / A3(2) / M145).